The following is a 155-amino-acid chain: Protein-export protein SecB (155 aa).

Belongs to the SecB family. Homotetramer, a dimer of dimers. One homotetramer interacts with 1 SecA dimer.

It localises to the cytoplasm. Functionally, one of the proteins required for the normal export of preproteins out of the cell cytoplasm. It is a molecular chaperone that binds to a subset of precursor proteins, maintaining them in a translocation-competent state. It also specifically binds to its receptor SecA. The protein is Protein-export protein SecB of Vibrio vulnificus (strain CMCP6).